Reading from the N-terminus, the 121-residue chain is Large ribosomal subunit protein uL18 (121 aa).

This sequence belongs to the universal ribosomal protein uL18 family. As to quaternary structure, part of the 50S ribosomal subunit; part of the 5S rRNA/L5/L18/L25 subcomplex. Contacts the 5S and 23S rRNAs.

Functionally, this is one of the proteins that bind and probably mediate the attachment of the 5S RNA into the large ribosomal subunit, where it forms part of the central protuberance. The polypeptide is Large ribosomal subunit protein uL18 (Paraburkholderia phymatum (strain DSM 17167 / CIP 108236 / LMG 21445 / STM815) (Burkholderia phymatum)).